A 230-amino-acid chain; its full sequence is RING finger protein 141 (230 aa).

The RING-type zinc-finger motif lies at Glu154 to Cys191.

The protein is RING finger protein 141 (RNF141) of Gallus gallus (Chicken).